A 71-amino-acid chain; its full sequence is Small ribosomal subunit protein bS21 (71 aa).

Positions 48-59 (KAAAAVKRHAKK) are enriched in basic residues. The interval 48–71 (KAAAAVKRHAKKVQREQRRRERLY) is disordered. The segment covering 60 to 71 (VQREQRRRERLY) has biased composition (basic and acidic residues).

It belongs to the bacterial ribosomal protein bS21 family.

This chain is Small ribosomal subunit protein bS21, found in Azotobacter vinelandii (strain DJ / ATCC BAA-1303).